A 122-amino-acid chain; its full sequence is MKVSDRRKFEKANFDEFESALNNKNDLVHCPSITLFESIPTEVRSFYEDEKSGLIKVVKFRTGAMDRKRSFEKIVISVMVGKNVQKFLTFVEDEPDFQGGPIPSNKPRDGLHVVSSAYFEIQ.

This is an uncharacterized protein from Saccharomyces cerevisiae (strain ATCC 204508 / S288c) (Baker's yeast).